Reading from the N-terminus, the 217-residue chain is Phosphatidylserine decarboxylase proenzyme (217 aa).

Catalysis depends on serine 183, which acts as the Schiff-base intermediate with substrate; via pyruvic acid. Residue serine 183 is modified to Pyruvic acid (Ser); by autocatalysis.

The protein belongs to the phosphatidylserine decarboxylase family. PSD-A subfamily. In terms of assembly, heterodimer of a large membrane-associated beta subunit and a small pyruvoyl-containing alpha subunit. Requires pyruvate as cofactor. In terms of processing, is synthesized initially as an inactive proenzyme. Formation of the active enzyme involves a self-maturation process in which the active site pyruvoyl group is generated from an internal serine residue via an autocatalytic post-translational modification. Two non-identical subunits are generated from the proenzyme in this reaction, and the pyruvate is formed at the N-terminus of the alpha chain, which is derived from the carboxyl end of the proenzyme. The post-translation cleavage follows an unusual pathway, termed non-hydrolytic serinolysis, in which the side chain hydroxyl group of the serine supplies its oxygen atom to form the C-terminus of the beta chain, while the remainder of the serine residue undergoes an oxidative deamination to produce ammonia and the pyruvoyl prosthetic group on the alpha chain.

The protein localises to the cell membrane. The enzyme catalyses a 1,2-diacyl-sn-glycero-3-phospho-L-serine + H(+) = a 1,2-diacyl-sn-glycero-3-phosphoethanolamine + CO2. It functions in the pathway phospholipid metabolism; phosphatidylethanolamine biosynthesis; phosphatidylethanolamine from CDP-diacylglycerol: step 2/2. In terms of biological role, catalyzes the formation of phosphatidylethanolamine (PtdEtn) from phosphatidylserine (PtdSer). This is Phosphatidylserine decarboxylase proenzyme from Cupriavidus metallidurans (strain ATCC 43123 / DSM 2839 / NBRC 102507 / CH34) (Ralstonia metallidurans).